Here is a 247-residue protein sequence, read N- to C-terminus: Adenosylcobinamide-GDP ribazoletransferase (247 aa).

Helical transmembrane passes span 34 to 54 (IITFPLIGLLLGAISGLVFMV), 59 to 79 (CGVPLAALFSVLVLALMTGGF), 113 to 133 (GGLALIFVVLAKILVLSELAL), 138 to 158 (ILASLAAACAVSRGTAALLMY), and 194 to 214 (VLLPGMHGVAAMVVTMVAIFI).

This sequence belongs to the CobS family. The cofactor is Mg(2+).

It localises to the cell inner membrane. It catalyses the reaction alpha-ribazole + adenosylcob(III)inamide-GDP = adenosylcob(III)alamin + GMP + H(+). It carries out the reaction alpha-ribazole 5'-phosphate + adenosylcob(III)inamide-GDP = adenosylcob(III)alamin 5'-phosphate + GMP + H(+). It participates in cofactor biosynthesis; adenosylcobalamin biosynthesis; adenosylcobalamin from cob(II)yrinate a,c-diamide: step 7/7. Its function is as follows. Joins adenosylcobinamide-GDP and alpha-ribazole to generate adenosylcobalamin (Ado-cobalamin). Also synthesizes adenosylcobalamin 5'-phosphate from adenosylcobinamide-GDP and alpha-ribazole 5'-phosphate. The chain is Adenosylcobinamide-GDP ribazoletransferase from Escherichia coli (strain 55989 / EAEC).